The sequence spans 431 residues: Adenylosuccinate synthetase (431 aa).

GTP contacts are provided by residues 13–19 (GDEGKGK) and 41–43 (GHT). Aspartate 14 functions as the Proton acceptor in the catalytic mechanism. Mg(2+)-binding residues include aspartate 14 and glycine 41. IMP-binding positions include 14-17 (DEGK), 39-42 (NAGH), threonine 130, arginine 144, glutamine 225, threonine 240, and arginine 304. Histidine 42 acts as the Proton donor in catalysis. 300–306 (SVTGRPR) is a substrate binding site. Residues arginine 306, 332 to 334 (KLD), and 414 to 416 (STG) each bind GTP.

This sequence belongs to the adenylosuccinate synthetase family. Homodimer. It depends on Mg(2+) as a cofactor.

It localises to the cytoplasm. The catalysed reaction is IMP + L-aspartate + GTP = N(6)-(1,2-dicarboxyethyl)-AMP + GDP + phosphate + 2 H(+). It functions in the pathway purine metabolism; AMP biosynthesis via de novo pathway; AMP from IMP: step 1/2. In terms of biological role, plays an important role in the de novo pathway of purine nucleotide biosynthesis. Catalyzes the first committed step in the biosynthesis of AMP from IMP. This Bordetella petrii (strain ATCC BAA-461 / DSM 12804 / CCUG 43448) protein is Adenylosuccinate synthetase.